The chain runs to 362 residues: 3-isopropylmalate dehydrogenase (362 aa).

An NAD(+)-binding site is contributed by 78 to 91; sequence GYKWDSLPPHQRPE. Substrate contacts are provided by R98, R108, R136, and D226. 3 residues coordinate Mg(2+): D226, D250, and D254. 284-296 provides a ligand contact to NAD(+); it reads GSAPDIAGLDKAN.

This sequence belongs to the isocitrate and isopropylmalate dehydrogenases family. LeuB type 1 subfamily. Homodimer. Mg(2+) is required as a cofactor. The cofactor is Mn(2+).

Its subcellular location is the cytoplasm. It catalyses the reaction (2R,3S)-3-isopropylmalate + NAD(+) = 4-methyl-2-oxopentanoate + CO2 + NADH. The protein operates within amino-acid biosynthesis; L-leucine biosynthesis; L-leucine from 3-methyl-2-oxobutanoate: step 3/4. In terms of biological role, catalyzes the oxidation of 3-carboxy-2-hydroxy-4-methylpentanoate (3-isopropylmalate) to 3-carboxy-4-methyl-2-oxopentanoate. The product decarboxylates to 4-methyl-2 oxopentanoate. The protein is 3-isopropylmalate dehydrogenase of Trichormus variabilis (strain ATCC 29413 / PCC 7937) (Anabaena variabilis).